The chain runs to 739 residues: MPFPVTTQGSQQTQPPQRHYGITSPISLAAPKETDCLLTQKLIETLKPFGVFEEEEELQRRILILGKLNNLVKEWIREISESKNLPQSVIENVGGKIFTFGSYRLGVHTKGADIDALCVAPRHVDRSDFFTSFYDKLKLQEEVKDLRAVEEAFVPVIKLCFDGIEIDILFARLALQTIPEDLDLRDDSLLKNLDIRCIRSLNGCRVTDEILHLVPNIDNFRLTLRAIKLWAKRHNIYSNILGFLGGVSWAMLVARTCQLYPNAIASTLVHKFFLVFSKWEWPNPVLLKQPEECNLNLPVWDPRVNPSDRYHLMPIITPAYPQQNSTYNVSVSTRMVMVEEFKQGLAITDEILLSKAEWSKLFEAPNFFQKYKHYIVLLASAPTEKQRLEWVGLVESKIRILVGSLEKNEFITLAHVNPQSFPAPKESPDREEFRTMWVIGLVFKKTENSENLSVDLTYDIQSFTDTVYRQAINSKMFELDMKIAAMHVKRKQLHQLLPSHVLQKRKKHSTEGVKLTALNDSSLDLSMDSDNSMSVPSPTSAMKTSPLNSSGSSQGRNSPAPAVTAASVTSIQASEVSVPQANSSESPGGPSSESIPQTATQPAISPPPKPTVSRVVSSTRLVNPSPRPSGNTATKVPNPIVGVKRTSSPNKEESPKKTKTEEDETSEDANCLALSGHDKTETKEQVDLETSAVQSETVPASASLLASQKTSSTDLSDIPALPANPIPVIKNSIKLRLNR.

The span at 1–17 (MPFPVTTQGSQQTQPPQ) shows a compositional bias: low complexity. Positions 1–22 (MPFPVTTQGSQQTQPPQRHYGI) are disordered. 2 positions are modified to phosphoserine: Ser-10 and Ser-24. Residues 100–102 (FGS), Thr-109, 113–115 (DID), Asp-167, Lys-228, Tyr-237, and 246–247 (GV) contribute to the ATP site. The Mg(2+) site is built by Asp-113, Asp-115, and Asp-167. Residues Lys-444, Lys-445, Lys-506, and Lys-507 each participate in a glycyl lysine isopeptide (Lys-Gly) (interchain with G-Cter in SUMO) cross-link. A Nuclear localization signal 1 motif is present at residues 490–507 (RKQLHQLLPSHVLQKRKK). The interval 508–643 (HSTEGVKLTA…TKVPNPIVGV (136 aa)) is ser/Thr-rich. Low complexity predominate over residues 523–534 (LDLSMDSDNSMS). The interval 523-725 (LDLSMDSDNS…SDIPALPANP (203 aa)) is disordered. Over residues 535–557 (VPSPTSAMKTSPLNSSGSSQGRN) the composition is skewed to polar residues. Phosphoserine; by MAPK is present on Ser-537. Residue Ser-558 is modified to Phosphoserine. The segment covering 566–582 (ASVTSIQASEVSVPQAN) has biased composition (polar residues). Composition is skewed to low complexity over residues 583 to 594 (SSESPGGPSSES) and 611 to 622 (TVSRVVSSTRLV). N6-acetyllysine is present on residues Lys-635 and Lys-644. The Nuclear localization signal 2 motif lies at 644–659 (KRTSSPNKEESPKKTK). 2 stretches are compositionally biased toward basic and acidic residues: residues 650-660 (NKEESPKKTKT) and 676-686 (GHDKTETKEQV). The interval 671 to 739 (CLALSGHDKT…KNSIKLRLNR (69 aa)) is required for interaction with NUDT21. A compositionally biased stretch (polar residues) spans 691–715 (SAVQSETVPASASLLASQKTSSTDL). Lys-730 is modified (N6-acetyllysine; alternate). Residue Lys-730 forms a Glycyl lysine isopeptide (Lys-Gly) (interchain with G-Cter in SUMO); alternate linkage. A Phosphoserine modification is found at Ser-732. Position 734 is an N6-acetyllysine; alternate (Lys-734). Residue Lys-734 forms a Glycyl lysine isopeptide (Lys-Gly) (interchain with G-Cter in SUMO); alternate linkage.

It belongs to the poly(A) polymerase family. In terms of assembly, monomer. Found in a complex with CPSF1, FIP1L1 and PAPOLA. Interacts with AHCYL1 and FIP1L1; the interaction with AHCYL1 seems to increase interaction with FIP1L1. Interacts with NUDT21; the interaction is diminished by acetylation. Interacts with KPNB1; the interaction promotes PAP nuclear import and is inhibited by acetylation of PAP. Mg(2+) serves as cofactor. Mn(2+) is required as a cofactor. Polysumoylated. Varying sumoylation depending on tissue- and cell-type. Highly sumoylated in bladder and NIH 3T3 cells. Sumoylation is required for nuclear localization and enhances PAP stability. Desumoylated by SENP1. Inhibits polymerase activity. In terms of processing, hyperphosphorylation on multiple CDK2 consensus and non-consensus sites in the C-terminal Ser/Thr-rich region represses PAP activity in late M-phase. Phosphorylation/dephosphorylation may regulate the interaction between PAP and CPSF. Post-translationally, acetylated in the C-terminus. Acetylation decreases interaction with NUDT21 and KPNB1, and inhibits nuclear localization through inhibiting binding to the importin alpha/beta complex. In terms of tissue distribution, expressed in brain, thymus, lung, kidney, bladder, testis and spleen.

The protein resides in the nucleus. It carries out the reaction RNA(n) + ATP = RNA(n)-3'-adenine ribonucleotide + diphosphate. Functionally, polymerase that creates the 3'-poly(A) tail of mRNA's. Also required for the endoribonucleolytic cleavage reaction at some polyadenylation sites. May acquire specificity through interaction with a cleavage and polyadenylation specificity factor (CPSF) at its C-terminus. This chain is Poly(A) polymerase alpha (Papola), found in Mus musculus (Mouse).